The primary structure comprises 58 residues: Small ribosomal subunit protein eS31 (58 aa).

The Zn(2+) site is built by C29, C32, C48, and C51. The segment at 29 to 51 (CPRCGSFMAHHLKPVPRWHCGKC) adopts a C4-type zinc-finger fold.

Belongs to the eukaryotic ribosomal protein eS31 family. Part of the 30S ribosomal subunit. It depends on Zn(2+) as a cofactor.

This chain is Small ribosomal subunit protein eS31, found in Ignicoccus hospitalis (strain KIN4/I / DSM 18386 / JCM 14125).